The following is a 253-amino-acid chain: tRNA (guanine-N(1)-)-methyltransferase (253 aa).

Residues Gly-110 and 130–135 contribute to the S-adenosyl-L-methionine site; that span reads IGDYIL.

It belongs to the RNA methyltransferase TrmD family. As to quaternary structure, homodimer.

It localises to the cytoplasm. It carries out the reaction guanosine(37) in tRNA + S-adenosyl-L-methionine = N(1)-methylguanosine(37) in tRNA + S-adenosyl-L-homocysteine + H(+). Its function is as follows. Specifically methylates guanosine-37 in various tRNAs. The sequence is that of tRNA (guanine-N(1)-)-methyltransferase from Carboxydothermus hydrogenoformans (strain ATCC BAA-161 / DSM 6008 / Z-2901).